The primary structure comprises 299 residues: ATP phosphoribosyltransferase (299 aa).

This sequence belongs to the ATP phosphoribosyltransferase family. Long subfamily. In terms of assembly, equilibrium between an active dimeric form, an inactive hexameric form and higher aggregates. Interconversion between the various forms is largely reversible and is influenced by the natural substrates and inhibitors of the enzyme. The cofactor is Mg(2+).

It is found in the cytoplasm. The enzyme catalyses 1-(5-phospho-beta-D-ribosyl)-ATP + diphosphate = 5-phospho-alpha-D-ribose 1-diphosphate + ATP. The protein operates within amino-acid biosynthesis; L-histidine biosynthesis; L-histidine from 5-phospho-alpha-D-ribose 1-diphosphate: step 1/9. Feedback inhibited by histidine. Its function is as follows. Catalyzes the condensation of ATP and 5-phosphoribose 1-diphosphate to form N'-(5'-phosphoribosyl)-ATP (PR-ATP). Has a crucial role in the pathway because the rate of histidine biosynthesis seems to be controlled primarily by regulation of HisG enzymatic activity. The protein is ATP phosphoribosyltransferase of Escherichia coli O7:K1 (strain IAI39 / ExPEC).